Reading from the N-terminus, the 490-residue chain is Ent-kaurenoic acid oxidase 1 (490 aa).

A helical membrane pass occupies residues 6–26; the sequence is SWIPVWFPLMVLGCFGLNWLV. Heme is bound at residue Cys439.

The protein belongs to the cytochrome P450 family. Heme serves as cofactor. Widely expressed. Highly expressed in influorescence stem, influorescence, and silique tissue. Weakly expressed in cauline and rosette leaves. Expressed at a higher level in stem and influorescence than AtKAO2/CYP88A4.

It is found in the endoplasmic reticulum membrane. It catalyses the reaction ent-kaur-16-en-19-oate + 3 reduced [NADPH--hemoprotein reductase] + 3 O2 = gibberellin A12 + 3 oxidized [NADPH--hemoprotein reductase] + 4 H2O + 4 H(+). The enzyme catalyses ent-kaur-16-en-19-oate + reduced [NADPH--hemoprotein reductase] + O2 = ent-7alpha-hydroxykaur-16-en-19-oate + oxidized [NADPH--hemoprotein reductase] + H2O + H(+). The catalysed reaction is ent-7alpha-hydroxykaur-16-en-19-oate + reduced [NADPH--hemoprotein reductase] + O2 = gibberellin A12 aldehyde + oxidized [NADPH--hemoprotein reductase] + 2 H2O + H(+). It carries out the reaction gibberellin A12 aldehyde + reduced [NADPH--hemoprotein reductase] + O2 = gibberellin A12 + oxidized [NADPH--hemoprotein reductase] + H2O + 2 H(+). Its pathway is plant hormone biosynthesis; gibberellin biosynthesis. Its function is as follows. Catalyzes three successive oxidations of ent-kaurenoic acid giving gibberellin 12 (GA12), a key step in gibberellins (GAs) biosynthesis. GAs, which are involved many processes, including stem elongation, play a central role in plant development. This Arabidopsis thaliana (Mouse-ear cress) protein is Ent-kaurenoic acid oxidase 1.